We begin with the raw amino-acid sequence, 313 residues long: MKRRRRWRGWLLFLALCFCLLCEAVETNATTVTSTTAAAATTNTTVATTGTTTTSPNVTSTTSNTVTTPTTVSSVSNLTSSATSILISTSTVSGTRNTRNNNTTTIGTNATSPSSSVSILTTVTPAATSTTSNNGDVTSDYTPTFDLENITTTRAPTRPPAQDLCSHNLSIILYEEESQSSVDIAVDEEEPELEDDDEYDELWFPLYFEAECNLNYTLQYVNHSCDYSVRQSSVSFPPWRDIDSVTFVPRNLSNCSAHGLAVIVAGNQTWYVNPFSLAHLLDAIYNVLGIEDLSANFWRQLAPYRHTLIVPQT.

A signal peptide spans 1-24; the sequence is MKRRRRWRGWLLFLALCFCLLCEA. Residues N28, N43, N57, N77, N101, N102, N109, N149, N168, N215, N222, N251, N254, and N267 are each glycosylated (N-linked (GlcNAc...) asparagine; by host). The interval 47–73 is disordered; the sequence is ATTGTTTTSPNVTSTTSNTVTTPTTVS. Over residues 90–114 the composition is skewed to low complexity; sequence STVSGTRNTRNNNTTTIGTNATSPS. The disordered stretch occupies residues 90-117; it reads STVSGTRNTRNNNTTTIGTNATSPSSSV.

Belongs to the HHV-5 US34A protein family.

This is an uncharacterized protein from Homo sapiens (Human).